Reading from the N-terminus, the 173-residue chain is Transcription factor S-II-related protein (173 aa).

The region spanning 9 to 129 (ISDKEREIVI…EETLNQMATV (121 aa)) is the TFIIS central domain. The TFIIS-type zinc-finger motif lies at 130-170 (EWKPCYACKNTSYHFYQLQTRSADEPMTTFYICKNCMKTYK). The Zn(2+) site is built by Cys134, Cys137, Cys162, and Cys165.

Belongs to the TFS-II family.

The polypeptide is Transcription factor S-II-related protein (Acanthamoeba polyphaga mimivirus (APMV)).